The following is a 134-amino-acid chain: Profilin-5 (134 aa).

A disulfide bridge links cysteine 13 with cysteine 118. The Involved in PIP2 interaction motif lies at 84 to 100; that stretch reads AVIRGKKGSGGITIKKT. A Phosphothreonine modification is found at threonine 114.

The protein belongs to the profilin family. As to quaternary structure, occurs in many kinds of cells as a complex with monomeric actin in a 1:1 ratio. Phosphorylated by MAP kinases.

It is found in the cytoplasm. The protein localises to the cytoskeleton. In terms of biological role, binds to actin and affects the structure of the cytoskeleton. At high concentrations, profilin prevents the polymerization of actin, whereas it enhances it at low concentrations. This chain is Profilin-5, found in Olea europaea (Common olive).